The following is a 330-amino-acid chain: G-protein coupled bile acid receptor 1 (330 aa).

At 1–19 the chain is on the extracellular side; sequence MTPNSTGEVPGPIPRGALE. The N-linked (GlcNAc...) asparagine glycan is linked to Asn-4. A helical membrane pass occupies residues 20–40; sequence LSLALASLIIAANLLLALGIA. Over 41–50 the chain is Cytoplasmic; sequence CDRRLRSPPA. A helical transmembrane segment spans residues 51–71; the sequence is GCFFLSLLLAGLLTGLALPTL. Topologically, residues 72–85 are extracellular; it reads PGLWRQSHRGYWSC. A disulfide bond links Cys-85 and Cys-155. A helical membrane pass occupies residues 86 to 106; it reads LLVYLAPNFSFLSLLANLLLV. Over 107 to 125 the chain is Cytoplasmic; it reads HGERYVAVLRPLQPPGSIR. Residues 126-146 form a helical membrane-spanning segment; the sequence is LALLLTWTGPLLFASLPALGW. Residues 147-169 are Extracellular-facing; that stretch reads NHWGPEANCSSQTIFPAPYLYLE. N-linked (GlcNAc...) asparagine glycosylation occurs at Asn-154. The chain crosses the membrane as a helical span at residues 170–190; that stretch reads VYGLLLPAVGAAALLSAHVLL. At 191-230 the chain is on the cytoplasmic side; sequence AAHRQLQDIRRLERAVCRDAPSALARALTWRQARAQAGAT. The helical transmembrane segment at 231–251 threads the bilayer; sequence LLFGLCWGPYVATLFLSVLAY. The Extracellular portion of the chain corresponds to 252-261; sequence EQRPPLGPGT. A helical transmembrane segment spans residues 262 to 282; the sequence is LLSLLSLGSASAAAVPVAMGL. The Cytoplasmic segment spans residues 283 to 330; that stretch reads GDHRYTAPWRAAARRWLRGLRGRGSQASPGPSTAYHTSSQSSVDVDLN. The segment at 304 to 330 is disordered; sequence GRGSQASPGPSTAYHTSSQSSVDVDLN. Polar residues predominate over residues 307–330; it reads SQASPGPSTAYHTSSQSSVDVDLN.

Belongs to the G-protein coupled receptor 1 family. In terms of tissue distribution, expressed at high level in spleen. Expressed at lower level in thymus, heart, lung, liver, kidney, ileum, blood and adherent alveolar macrophage cells.

It is found in the cell membrane. In terms of biological role, receptor for bile acid. Bile-acid binding induces its internalization, activation of extracellular signal-regulated kinase and intracellular cAMP production. May be involved in the suppression of macrophage functions by bile acids. Involved in bile acid promoted GLP1R secretion. This chain is G-protein coupled bile acid receptor 1 (GPBAR1), found in Oryctolagus cuniculus (Rabbit).